The primary structure comprises 123 residues: Small ribosomal subunit protein bS18 (123 aa).

Over residues 1–10 (MADETTVSTP) the composition is skewed to polar residues. The tract at residues 1–52 (MADETTVSTPAASGTETPSTGGGGAPQGRPQGGPRGDRGPRPGGSGRDGGRK) is disordered. A compositionally biased stretch (gly residues) spans 20-34 (TGGGGAPQGRPQGGP).

It belongs to the bacterial ribosomal protein bS18 family. As to quaternary structure, part of the 30S ribosomal subunit. Forms a tight heterodimer with protein bS6.

Its function is as follows. Binds as a heterodimer with protein bS6 to the central domain of the 16S rRNA, where it helps stabilize the platform of the 30S subunit. This Koribacter versatilis (strain Ellin345) protein is Small ribosomal subunit protein bS18.